The following is a 266-amino-acid chain: Undecaprenyl-diphosphatase 1 (266 aa).

8 helical membrane passes run 1 to 21 (MSII…FLPI), 39 to 59 (QGLA…VIYF), 83 to 103 (SKLG…GLLL), 113 to 133 (SAWV…YADA), 141 to 161 (IYQL…VAMI), 189 to 209 (FLLA…ELAL), 218 to 238 (TLLL…YMFL), and 244 to 264 (MGML…IVFL).

It belongs to the UppP family.

It localises to the cell inner membrane. The enzyme catalyses di-trans,octa-cis-undecaprenyl diphosphate + H2O = di-trans,octa-cis-undecaprenyl phosphate + phosphate + H(+). In terms of biological role, catalyzes the dephosphorylation of undecaprenyl diphosphate (UPP). Confers resistance to bacitracin. This chain is Undecaprenyl-diphosphatase 1, found in Pseudoalteromonas translucida (strain TAC 125).